Here is a 92-residue protein sequence, read N- to C-terminus: Protein AC152 (92 aa).

Acts as a transactivator of AC102 and HE65 genes. Therefore, participates in the global recruitment of G-actin to the host nucleus. The chain is Protein AC152 (AC152) from Autographa californica nuclear polyhedrosis virus (AcMNPV).